Here is a 464-residue protein sequence, read N- to C-terminus: Citrate synthase 5, mitochondrial (464 aa).

The transit peptide at 1 to 25 (MVFFRSVSAISRLRSRAVQQSSLSN) directs the protein to the mitochondrion. Catalysis depends on residues H300, H346, and D401.

This sequence belongs to the citrate synthase family.

It is found in the mitochondrion matrix. The catalysed reaction is oxaloacetate + acetyl-CoA + H2O = citrate + CoA + H(+). The protein operates within carbohydrate metabolism; tricarboxylic acid cycle; isocitrate from oxaloacetate: step 1/2. This is Citrate synthase 5, mitochondrial (CSY5) from Arabidopsis thaliana (Mouse-ear cress).